A 792-amino-acid chain; its full sequence is Phenylalanine--tRNA ligase beta subunit (792 aa).

One can recognise a tRNA-binding domain in the interval N38–F148. Residues E406–E482 form the B5 domain. Mg(2+) is bound by residues D460, D466, E469, and E470. The 93-residue stretch at Y698–R790 folds into the FDX-ACB domain.

It belongs to the phenylalanyl-tRNA synthetase beta subunit family. Type 1 subfamily. In terms of assembly, tetramer of two alpha and two beta subunits. Mg(2+) is required as a cofactor.

Its subcellular location is the cytoplasm. It catalyses the reaction tRNA(Phe) + L-phenylalanine + ATP = L-phenylalanyl-tRNA(Phe) + AMP + diphosphate + H(+). In Wolbachia sp. subsp. Brugia malayi (strain TRS), this protein is Phenylalanine--tRNA ligase beta subunit.